A 467-amino-acid polypeptide reads, in one-letter code: UDP-N-acetylmuramate--L-alanine ligase (467 aa).

An ATP-binding site is contributed by 121–127; sequence GSHGKTT.

The protein belongs to the MurCDEF family.

It is found in the cytoplasm. The enzyme catalyses UDP-N-acetyl-alpha-D-muramate + L-alanine + ATP = UDP-N-acetyl-alpha-D-muramoyl-L-alanine + ADP + phosphate + H(+). It functions in the pathway cell wall biogenesis; peptidoglycan biosynthesis. Functionally, cell wall formation. The protein is UDP-N-acetylmuramate--L-alanine ligase of Parasynechococcus marenigrum (strain WH8102).